A 541-amino-acid polypeptide reads, in one-letter code: Putative apolipoprotein N-acyltransferase (541 aa).

Transmembrane regions (helical) follow at residues 31–51, 65–85, 89–109, 144–164, 181–201, and 215–235; these read PLPA…AAHA, GWLF…VSMH, GLAA…LALF, AACW…FPWL, LLGV…LAGL, and LAAG…QFSW. The region spanning 248–511 is the CN hydrolase domain; it reads VQGNVEQSQK…AGVLPVAVQG (264 aa). Glu292 acts as the Proton acceptor in catalysis. Lys366 is an active-site residue. The Nucleophile role is filled by Cys416.

This sequence belongs to the CN hydrolase family. Apolipoprotein N-acyltransferase subfamily.

It is found in the cell inner membrane. It carries out the reaction N-terminal S-1,2-diacyl-sn-glyceryl-L-cysteinyl-[lipoprotein] + a glycerophospholipid = N-acyl-S-1,2-diacyl-sn-glyceryl-L-cysteinyl-[lipoprotein] + a 2-acyl-sn-glycero-3-phospholipid + H(+). It functions in the pathway protein modification; lipoprotein biosynthesis (N-acyl transfer). Its function is as follows. Catalyzes the phospholipid dependent N-acylation of the N-terminal cysteine of apolipoprotein, the last step in lipoprotein maturation. The chain is Putative apolipoprotein N-acyltransferase from Bordetella parapertussis (strain 12822 / ATCC BAA-587 / NCTC 13253).